We begin with the raw amino-acid sequence, 156 residues long: Small ribosomal subunit protein uS7c (156 aa).

Belongs to the universal ribosomal protein uS7 family. In terms of assembly, part of the 30S ribosomal subunit.

The protein resides in the plastid. It is found in the chloroplast. One of the primary rRNA binding proteins, it binds directly to 16S rRNA where it nucleates assembly of the head domain of the 30S subunit. This is Small ribosomal subunit protein uS7c (rps7) from Porphyra purpurea (Red seaweed).